The chain runs to 995 residues: Integrator complex subunit 8 (995 aa).

Phosphothreonine is present on threonine 18. The WFEF motif signature appears at 24–29; sequence WFEFLL. 4 TPR repeats span residues 250–288, 320–356, 570–603, and 833–866; these read CQVCYDLGAAYFQQGSTDSAIYENAREKFFRTKELLAEI, SQQLTPYSQVHICLRSGSYQEVVQIFIEDNLTFTLPV, VYILMAKGLHCSTVKDFPHSKQLFTACLELVTEF, and HAWLIIQADIYFATNQHSAALHYYLQAGAVCSDF.

This sequence belongs to the Integrator subunit 8 family. As to quaternary structure, component of the Integrator complex, composed of core subunits INTS1, INTS2, INTS3, INTS4, INTS5, INTS6, INTS7, INTS8, INTS9/RC74, INTS10, INTS11/CPSF3L, INTS12, INTS13, INTS14 and INTS15. The core complex associates with protein phosphatase 2A subunits PPP2CA and PPP2R1A, to form the Integrator-PP2A (INTAC) complex.

Its subcellular location is the nucleus. The protein resides in the chromosome. Functionally, component of the integrator complex, a multiprotein complex that terminates RNA polymerase II (Pol II) transcription in the promoter-proximal region of genes. The integrator complex provides a quality checkpoint during transcription elongation by driving premature transcription termination of transcripts that are unfavorably configured for transcriptional elongation: the complex terminates transcription by (1) catalyzing dephosphorylation of the C-terminal domain (CTD) of Pol II subunit POLR2A/RPB1 and SUPT5H/SPT5, (2) degrading the exiting nascent RNA transcript via endonuclease activity and (3) promoting the release of Pol II from bound DNA. The integrator complex is also involved in terminating the synthesis of non-coding Pol II transcripts, such as enhancer RNAs (eRNAs), small nuclear RNAs (snRNAs), telomerase RNAs and long non-coding RNAs (lncRNAs). Within the integrator complex, INTS8 is required for the recruitment of protein phosphatase 2A (PP2A) to transcription pause-release checkpoint. The polypeptide is Integrator complex subunit 8 (Ints8) (Mus musculus (Mouse)).